Consider the following 60-residue polypeptide: Ferredoxin (60 aa).

2 consecutive 4Fe-4S ferredoxin-type domains span residues 2 to 30 (VTIDYDKCKGPECAECVNACPMEVFEIQG) and 31 to 60 (DKVVVAKEDDCTFCMVCVDVCPTDAITVKE). [4Fe-4S] cluster contacts are provided by C9, C14, C17, C21, C41, C44, C47, and C51.

[4Fe-4S] cluster serves as cofactor.

Its function is as follows. Ferredoxins are iron-sulfur proteins that transfer electrons probably in the CO-dehydrogenase complex. This is Ferredoxin from Methanothermococcus thermolithotrophicus (Methanococcus thermolithotrophicus).